The sequence spans 584 residues: Dihydroxyacetone kinase 1 (584 aa).

Ser-2 bears the N-acetylserine mark. Phosphoserine occurs at positions 2 and 5. One can recognise a DhaK domain in the interval Glu-7 to Trp-353. Substrate-binding positions include Gly-51–His-54, Lys-103, and Asp-108. His-220 functions as the Tele-hemiaminal-histidine intermediate in the catalytic mechanism. Position 365 is a phosphoserine (Ser-365). The DhaL domain occupies Asp-386 to Ser-582. ATP is bound by residues Asp-415–Cys-418 and Thr-459–Ser-460. Ser-512 carries the post-translational modification Phosphoserine. ATP-binding positions include Thr-514–Met-515 and Asp-567–Gly-569.

The protein belongs to the dihydroxyacetone kinase (DAK) family.

The enzyme catalyses dihydroxyacetone + ATP = dihydroxyacetone phosphate + ADP + H(+). It carries out the reaction D-glyceraldehyde + ATP = D-glyceraldehyde 3-phosphate + ADP + H(+). It functions in the pathway polyol metabolism; glycerol fermentation; glycerone phosphate from glycerol (oxidative route): step 2/2. Its function is as follows. Catalyzes both the phosphorylation of dihydroxyacetone and of glyceraldehyde. This Saccharomyces cerevisiae (strain ATCC 204508 / S288c) (Baker's yeast) protein is Dihydroxyacetone kinase 1 (DAK1).